Consider the following 285-residue polypeptide: MNTFQMRDKLKERLSHLDVDFKFNREEETLRIYRTDNNKGITIKLNAIVAKYEDKKEKIVDEIVYYVDEAIAQMADKTLESISSSQIMPVIRATSFDKKTKQGVPFIYDEHTAETAVYYAVDLGKSYRLIDESMLEDLKLTEQQIREMSLFNVRKLSNSYTTDEVKGNTFYFINSNDGYDASRILNTAFLNEIEAQCQGEMLVAVPHQDVLIIADIRNKTGYDVMAHLTMEFFTKGLVPITSLSFGYKQGHLEPIFILGKNNKQKRDPNVIQRLEANRRKFNKDK.

It belongs to the UPF0354 family.

The polypeptide is UPF0354 protein MW1686 (Staphylococcus aureus (strain MW2)).